Reading from the N-terminus, the 137-residue chain is 3-hydroxyacyl-[acyl-carrier-protein] dehydratase FabZ (137 aa).

Residue H46 is part of the active site.

It belongs to the thioester dehydratase family. FabZ subfamily.

The protein resides in the cytoplasm. It catalyses the reaction a (3R)-hydroxyacyl-[ACP] = a (2E)-enoyl-[ACP] + H2O. Involved in unsaturated fatty acids biosynthesis. Catalyzes the dehydration of short chain beta-hydroxyacyl-ACPs and long chain saturated and unsaturated beta-hydroxyacyl-ACPs. In Thermotoga neapolitana (strain ATCC 49049 / DSM 4359 / NBRC 107923 / NS-E), this protein is 3-hydroxyacyl-[acyl-carrier-protein] dehydratase FabZ.